Consider the following 879-residue polypeptide: DNA mismatch repair protein MutS (879 aa).

ATP is bound at residue 639 to 646; sequence GPNMGGKS.

It belongs to the DNA mismatch repair MutS family.

This protein is involved in the repair of mismatches in DNA. It is possible that it carries out the mismatch recognition step. This protein has a weak ATPase activity. The protein is DNA mismatch repair protein MutS of Aromatoleum aromaticum (strain DSM 19018 / LMG 30748 / EbN1) (Azoarcus sp. (strain EbN1)).